Consider the following 305-residue polypeptide: Uracil-DNA glycosylase (305 aa).

Asp-148 acts as the Proton acceptor in catalysis.

It belongs to the uracil-DNA glycosylase (UDG) superfamily. UNG family.

It localises to the host nucleus. The enzyme catalyses Hydrolyzes single-stranded DNA or mismatched double-stranded DNA and polynucleotides, releasing free uracil.. In terms of biological role, excises uracil residues from the DNA which can arise as a result of misincorporation of dUMP residues by DNA polymerase or deamination of cytosines. Therefore may reduce deleterious uracil incorporation into the viral genome, particularly in terminally differentiated cells which lack DNA repair enzymes. The protein is Uracil-DNA glycosylase of Varicella-zoster virus (strain Dumas) (HHV-3).